A 225-amino-acid polypeptide reads, in one-letter code: PKHD-type hydroxylase YbiX (225 aa).

One can recognise a Fe2OG dioxygenase domain in the interval 78 to 177 (TLSTPLFNRY…RVASFMWIQS (100 aa)). The Fe cation site is built by His96, Asp98, and His158. Position 168 (Arg168) interacts with 2-oxoglutarate.

It depends on Fe(2+) as a cofactor. L-ascorbate is required as a cofactor.

This is PKHD-type hydroxylase YbiX from Escherichia coli O6:K15:H31 (strain 536 / UPEC).